We begin with the raw amino-acid sequence, 267 residues long: Elsinochrome reductase 1 (267 aa).

Positions 26, 72, 99, and 132 each coordinate NADP(+). Residue Ser-149 is the Proton donor of the active site. NADP(+) is bound by residues Tyr-163, Lys-167, Ile-196, and Thr-198. The Proton acceptor role is filled by Tyr-163. The active-site Lowers pKa of active site Tyr is the Lys-167.

Belongs to the short-chain dehydrogenases/reductases (SDR) family.

Its function is as follows. Reductase; part of the gene cluster that mediates the biosynthesis of elsinochromes, pigments consisting of at least four interconvertible tautomers (A, B, C and D) that have a core phenolic quinone to which various side chains are attached and which play an important role in fungal pathogenesis. The non-reducing polyketide synthase PKS1 was proposed to iteratively catalyze decarboxylation between acetyl-CoA and malonyl-CoA subunits for polyketide chain elongation. The released polyketide undergoes cyclization to form an aromatic ring, and proceeds via serial modification steps to produce the heptaketide back- bone of elsinochrome. As elsinochrome has a symmetrical structure, two identical heptaketides are fused to form a core 1,2-dihydrobenzo-perylene ring structure, which can then be successively modified to produce the various derivatives of elsinochrome. Some of these reactions may be cooperatively carried out, at least in part, by the products of RDT1, OXR1 and PKS1. PRF1, embedded within the elsinochrome cluster possibly functions to stabilize some of the biosynthetic enzymes required for elsinochrome production. As prefoldin is a hexamer containing 2 a and 4 b subunits, additional prefoldin subunits, whose coding genes may not immediately link to the elsinochrome biosynthetic gene cluster, are required to fulfill the chaperone function. In addition, no methyltransferase-coding gene exists within the biosynthetic gene cluster, even though elsinochrome has four methyl groups at positions C3, C7, C8 and C12. Apparently, the identified gene cluster does not contain the entire entourage of genes responsible for elsinochrome biosynthesis. Once elsinochrome is synthesized, it must be exported outside the fungal cells, which is probably accomplished by the ECT1 transporter, to avoid toxicity. The protein is Elsinochrome reductase 1 of Elsinoe fawcettii (Citrus scab fungus).